A 308-amino-acid polypeptide reads, in one-letter code: Ceramide synthase 1 LOH3 (308 aa).

The next 6 membrane-spanning stretches (helical) occupy residues 25-45 (VLPLFAVFFPSIRFLLDRFVF), 82-102 (CVYYLSAEILALSVTYNEPWF), 128-148 (LLYMFVAGFYTYSIFALVFWE), 154-174 (FGVSMGHHIATLILIVLSYVC), 213-233 (FILFVLSWIILRLIYYPFWIL), and 258-278 (YMFNTLLYCLLVLHIYWWVLM). Positions 73 to 287 (RKFKESAWKC…MYRMLVKQIQ (215 aa)) constitute a TLC domain. Serine 298 and serine 300 each carry phosphoserine.

Expressed ubiquitously at low levels. Not observed in pollen.

It is found in the endoplasmic reticulum membrane. The enzyme catalyses (4R)-hydroxysphinganine + a fatty acyl-CoA = an N-acyl-(4R)-4-hydroxysphinganine + CoA + H(+). It carries out the reaction a sphingoid base + tetracosanoyl-CoA = an N-tetracosanoyl-sphingoid base + CoA + H(+). The catalysed reaction is (4R)-hydroxysphinganine + hexadecanoyl-CoA = N-hexadecanoyl-(4R)-hydroxysphinganine + CoA + H(+). It catalyses the reaction (4R)-hydroxysphinganine + octadecanoyl-CoA = N-octadecanoyl-(4R)-hydroxysphinganine + CoA + H(+). The enzyme catalyses (4R)-hydroxysphinganine + eicosanoyl-CoA = N-eicosanoyl-(4R)-hydroxysphinganine + CoA + H(+). It carries out the reaction docosanoyl-CoA + (4R)-hydroxysphinganine = N-docosanoyl-(4R)-hydroxysphinganine + CoA + H(+). The catalysed reaction is hexacosanoyl-CoA + (4R)-hydroxysphinganine = N-hexacosanoyl-(4R)-hydroxysphinganine + CoA + H(+). It catalyses the reaction tetracosanoyl-CoA + (4R)-hydroxysphinganine = N-tetracosanoyl-(4R)-hydroxysphinganine + CoA + H(+). The enzyme catalyses tetracosanoyl-CoA + sphing-4-enine = N-tetracosanoyl-sphing-4-enine + CoA + H(+). It carries out the reaction sphinga-(4E,8Z)-dienine + tetracosanoyl-CoA = N-tetracosanoylsphinga-(4E,8Z)-dienine + CoA + H(+). The catalysed reaction is sphinga-(4E,8E)-dienine + tetracosanoyl-CoA = N-tetracosanoylsphinga-(4E,8E)-dienine + CoA + H(+). It catalyses the reaction (4R)-hydroxysphing-(8Z)-enine + tetracosanoyl-CoA = N-tetracosanoyl-(4R)-hydroxysphing-(8Z)-enine + CoA + H(+). The enzyme catalyses (4R)-hydroxysphing-(8E)-enine + tetracosanoyl-CoA = N-tetracosanoyl-(4R)-hydroxysphing-(8E)-enine + CoA + H(+). It functions in the pathway sphingolipid metabolism. Its activity is regulated as follows. Inhibited by the mycotoxin fumonisin B(1), a sphingosine analog mycotoxins produced by pathogenic fungi. Repressed by divalent cation such as magnesium Mg(2+), copper Cu(2+), zinc Zn(2+), manganese Mn(2+), calcium Ca(2+) and cobalt Co(2+). Essential for plant growth, promotes cell division in root meristems. Catalyzes the biosynthesis of ceramide sphingolipids with C(16) to C(28) fatty acids, structural membrane lipids involved in membrane trafficking (e.g. early endosomes) and cell polarity (e.g. polar auxin transport related proteins); active on a broad substrate spectrum, both regarding chain lengths of fatty acids and the sphingoid base, such as long-chain base (LCB) phytosphingosine (t18:0). Mediates resistance to sphinganine-analog mycotoxins (SAMs, e.g. fumonisin B(1)) by restoring the sphingolipid biosynthesis. Could salvage the transport of GPI-anchored proteins from the endoplasmic reticulum to the Golgi apparatus in ceramides-depleted cells after SAM exposure. Contributes to hypoxic conditions tolerance (e.g. submergences), especially in the dark, by promoting the formation of very-long-chain (VLC) ceramide species (22:1, 24:1 and 26:1) and of VLC unsaturated ceramides, which are modulating CTR1-mediated ethylene signaling leading to endoplasmic reticulum (ER)-to-nucleus translocation of EIN2 and EIN3. This is Ceramide synthase 1 LOH3 from Arabidopsis thaliana (Mouse-ear cress).